Reading from the N-terminus, the 605-residue chain is Tungsten-containing aldehyde ferredoxin oxidoreductase (605 aa).

Arginine 76, asparagine 93, glycine 95, arginine 182, alanine 183, glycine 185, and arginine 186 together coordinate tungstopterin. Residues cysteine 288, cysteine 291, and cysteine 295 each coordinate [4Fe-4S] cluster. Residues aspartate 338, leucine 342, aspartate 343, arginine 444, lysine 450, aspartate 489, and leucine 493 each coordinate tungstopterin. Position 494 (cysteine 494) interacts with [4Fe-4S] cluster. Residue leucine 495 coordinates tungstopterin.

This sequence belongs to the AOR/FOR family. As to quaternary structure, monomer. Homodimer. [4Fe-4S] cluster is required as a cofactor. It depends on tungstopterin as a cofactor.

The catalysed reaction is an aldehyde + 2 oxidized [2Fe-2S]-[ferredoxin] + H2O = a carboxylate + 2 reduced [2Fe-2S]-[ferredoxin] + 3 H(+). Its activity is regulated as follows. Inhibited by arsenite, iodoacetate and cyanide. Aldehyde ferredoxin oxidoreductase with a broad substrate specificity. Catalyzes the oxidation of a range of aliphatic aldehydes to their corresponding carboxylic acids. In vitro can use crotonaldehyde, acetaldehyde, formaldehyde, butyraldehyde or glyceraldehyde as substrate, using methyl viologen or ferredoxin, but not NAD(P), as the electron acceptor. Does not oxidize glucose or glyceraldehyde 3-phosphate. May be involved in a pyroglycolytic pathway. The protein is Tungsten-containing aldehyde ferredoxin oxidoreductase of Pyrococcus furiosus (strain ATCC 43587 / DSM 3638 / JCM 8422 / Vc1).